Consider the following 780-residue polypeptide: Cullin-5 (780 aa).

S34 is subject to Phosphoserine. T210 carries the phosphothreonine modification. A Cullin neddylation domain is found at 711-772 (RILRTQEAII…HRYIRRDEAD (62 aa)). K724 participates in a covalent cross-link: Glycyl lysine isopeptide (Lys-Gly) (interchain with G-Cter in NEDD8).

It belongs to the cullin family. As to quaternary structure, component of multiple cullin-5-RING E3 ubiquitin-protein ligase complexes (ECS complexes, also named CRL5 complexes) formed of CUL5, Elongin BC (ELOB and ELOC), RNF7/RBX2 and a variable SOCS box domain-containing protein as substrate-specific recognition component. CUL5-containing ECS complexes specifically contain RNF7/RBX2, and not RBX1, as catalytic subunit. Component of the ECS(ASB2) complex with the substrate recognition component ASB2. Component of the ECS(ASB6) complex with the substrate recognition component ASB6. Component of the ECS(ASB7) complex with the substrate recognition component ASB7. Component of the ECS(ASB9) complex with the substrate recognition component ASB9. Component of the ECS(ASB11) complex with the substrate recognition component ASB11. Component of the ECS(ASB12) complex with the substrate recognition component ASB12. Component of the ECS(LRRC41) complex with the substrate recognition component LRRC41. Component of the ECS(SOCS1) complex with the substrate recognition component SOCS1. Component of the ECS(SOCS2) complex with the substrate recognition component SOCS2. Component of the ECS(WSB1) complex with the substrate recognition subunit WSB1. Component of the ECS(SOCS3) complex with the substrate recognition component SOCS3. Component of the ECS(SOCS7) complex with the substrate recognition component SOCS7. Component of the ECS(SPSB1) complex with the substrate recognition component SPSB1. Component of the ECS(SPSB3) complex with the substrate recognition component SPSB3. Component of the ECS(SPSB2) complex with the substrate recognition component SPSB2. Component of the ECS(SPSB4) complex with the substrate recognition component SPSB4. Component of the ECS(RAB40) complex with the substrate recognition subunit RAB40A, RAB40B or RAB40C. Component of the ECS(KLHDC1) complex with the substrate recognition component KLHDC1. Component of the ECS(PCMTD1) complex with the substrate recognition subunit PCMTD1. May also form complexes containing RBX1 and ELOA or VHL; additional evidence is however required to confirm this result in vivo. Interacts (when neddylated) with ARIH2; leading to activate the E3 ligase activity of ARIH2. Interacts with ERCC6; the interaction is induced by DNA damaging agents or inhibitors of RNA polymerase II elongation. Interacts with ELOA (via the BC-box). Interacts (unneddylated form) with DCUN1D1, DCUN1D2, DCUN1D3, DCUN1D4 and DCUN1D5; these interactions promote the cullin neddylation. Neddylated; which enhances the ubiquitination activity of ECS complexes and prevents binding of the inhibitor CAND1. Deneddylated via its interaction with the COP9 signalosome (CSN).

It localises to the nucleus. It functions in the pathway protein modification; protein ubiquitination. Functionally, core component of multiple cullin-5-RING E3 ubiquitin-protein ligase complexes (ECS complexes, also named CRL5 complexes), which mediate the ubiquitination and subsequent proteasomal degradation of target proteins. Acts a scaffold protein that contributes to catalysis through positioning of the substrate and the ubiquitin-conjugating enzyme. The functional specificity of the E3 ubiquitin-protein ligase complex depends on the variable SOCS box-containing substrate recognition component. Acts as a key regulator of neuron positioning during cortex development: component of various SOCS-containing ECS complexes, such as the ECS(SOCS7) complex, that regulate reelin signaling by mediating ubiquitination and degradation of DAB1. ECS(SOCS1) seems to direct ubiquitination of JAK2. The ECS(SOCS2) complex mediates the ubiquitination and subsequent proteasomal degradation of phosphorylated EPOR and GHR. The ECS(SPSB3) complex catalyzes ubiquitination of nuclear CGAS. ECS(KLHDC1) complex is part of the DesCEND (destruction via C-end degrons) pathway and mediates ubiquitination and degradation of truncated SELENOS selenoprotein produced by failed UGA/Sec decoding, which ends with a glycine. The ECS(ASB9) complex mediates ubiquitination and degradation of CKB. As part of some ECS complex, promotes 'Lys-11'-linked ubiquitination and degradation of BTRC. As part of a multisubunit ECS complex, polyubiquitinates monoubiquitinated POLR2A. As part of the ECS(RAB40C) complex, mediates ANKRD28 ubiquitination and degradation, thereby regulating protein phosphatase 6 (PP6) complex activity and focal adhesion assembly during cell migration. As part of the ECS(RAB40A) complex, mediates RHOU 'Lys-48'-linked ubiquitination and degradation, thus inhibiting focal adhesion disassembly during cell migration. As part of the ECS(RAB40B) complex, mediates LIMA1/EPLIN and RAP2 ubiquitination, thereby regulating actin cytoskeleton dynamics and stress fiber formation during cell migration. May form a cell surface vasopressin receptor. The protein is Cullin-5 of Mus musculus (Mouse).